The chain runs to 513 residues: Glutamate--tRNA ligase 2 (513 aa).

Positions 11 to 21 match the 'HIGH' region motif; that stretch reads PSPTGFLHIGS. Positions 240 to 244 match the 'KMSKS' region motif; the sequence is KLSKR. ATP is bound at residue Lys243.

It belongs to the class-I aminoacyl-tRNA synthetase family. Glutamate--tRNA ligase type 1 subfamily. Monomer.

The protein resides in the cytoplasm. The catalysed reaction is tRNA(Glu) + L-glutamate + ATP = L-glutamyl-tRNA(Glu) + AMP + diphosphate. Its function is as follows. Catalyzes the attachment of glutamate to tRNA(Glu) in a two-step reaction: glutamate is first activated by ATP to form Glu-AMP and then transferred to the acceptor end of tRNA(Glu). The chain is Glutamate--tRNA ligase 2 from Rickettsia rickettsii (strain Iowa).